Consider the following 173-residue polypeptide: MDIAIQHPWFKRALGPFYPSRLFDQFFGEGLFEYDLLPFLSSTISPYYRQPVFRSVLDSGISEVRSDRDKFVIFLDVKHFSPEDLTVKVLEDFVEIHGKHNERQDDHGYISREFHRRYRLPSNVDQSALSCSLSADGMLTFSGPKVPSGVDAGHSERAIPVSREEKPSSAPSS.

Methionine 1 is modified (N-acetylmethionine). The segment at 1-63 is required for complex formation with BFSP1 and BFSP2; it reads MDIAIQHPWF…RSVLDSGISE (63 aa). Deamidated glutamine; partial is present on glutamine 6. Serine 45 is modified (phosphoserine). Deamidated glutamine; partial is present on glutamine 50. In terms of domain architecture, sHSP spans 52-162; that stretch reads VFRSVLDSGI…GHSERAIPVS (111 aa). 2 positions are modified to N6-acetyllysine: lysine 70 and lysine 99. Histidine 100 contacts Zn(2+). Deamidated asparagine; partial is present on asparagine 101. 2 residues coordinate Zn(2+): glutamate 102 and histidine 107. A Phosphoserine modification is found at serine 122. Deamidated asparagine; partial is present on asparagine 123. The interval 144–173 is disordered; it reads PKVPSGVDAGHSERAIPVSREEKPSSAPSS. Positions 153 to 167 are enriched in basic and acidic residues; that stretch reads GHSERAIPVSREEKP. Histidine 154 is a Zn(2+) binding site. A glycan (O-linked (GlcNAc) serine) is linked at serine 162.

Belongs to the small heat shock protein (HSP20) family. Heteromer composed of three CRYAA and one CRYAB subunits. Inter-subunit bridging via zinc ions enhances stability, which is crucial as there is no protein turn over in the lens. Can also form homodimers and homotetramers (dimers of dimers) which serve as the building blocks of homooligomers. Within homooligomers, the zinc-binding motif is created from residues of 3 different molecules. His-100 and Glu-102 from one molecule are ligands of the zinc ion, and His-107 and His-154 residues from additional molecules complete the site with tetrahedral coordination geometry. Part of a complex required for lens intermediate filament formation composed of BFSP1, BFSP2 and CRYAA. Post-translationally, acetylation at Lys-70 may increase chaperone activity. Undergoes age-dependent proteolytical cleavage at the C-terminus.

The protein localises to the cytoplasm. It is found in the nucleus. Functionally, contributes to the transparency and refractive index of the lens. Acts as a chaperone, preventing aggregation of various proteins under a wide range of stress conditions. Required for the correct formation of lens intermediate filaments as part of a complex composed of BFSP1, BFSP2 and CRYAA. This Halichoerus grypus (Gray seal) protein is Alpha-crystallin A chain (CRYAA).